We begin with the raw amino-acid sequence, 251 residues long: MVEDSQETTHFGFQTVAKEQKADMVAHVFHSVAAKYDVMNDLMSFGIHRLWKRFTIDCSGVRRGQTVLDLAGGTGDLTAKFSRLVGETGRVMLADINDSMLKMGREKLRNIGIVGNVEYVQANAEALPFADNTFDCITISFGLRNVTDKEKALRSMYRVLKPGGRLLVLEFSKPIIEPLSKAYDAYSFHILPKVGELVAKDGDSYRYLAESIRMHPDQETLKGMMQDAGFENVDYYNLTAGIVALHRGYKF.

Residues T74, D95, N123 to A124, and S140 each bind S-adenosyl-L-methionine.

This sequence belongs to the class I-like SAM-binding methyltransferase superfamily. MenG/UbiE family.

It carries out the reaction a 2-demethylmenaquinol + S-adenosyl-L-methionine = a menaquinol + S-adenosyl-L-homocysteine + H(+). The enzyme catalyses a 2-methoxy-6-(all-trans-polyprenyl)benzene-1,4-diol + S-adenosyl-L-methionine = a 5-methoxy-2-methyl-3-(all-trans-polyprenyl)benzene-1,4-diol + S-adenosyl-L-homocysteine + H(+). Its pathway is quinol/quinone metabolism; menaquinone biosynthesis; menaquinol from 1,4-dihydroxy-2-naphthoate: step 2/2. It functions in the pathway cofactor biosynthesis; ubiquinone biosynthesis. In terms of biological role, methyltransferase required for the conversion of demethylmenaquinol (DMKH2) to menaquinol (MKH2) and the conversion of 2-polyprenyl-6-methoxy-1,4-benzoquinol (DDMQH2) to 2-polyprenyl-3-methyl-6-methoxy-1,4-benzoquinol (DMQH2). The chain is Ubiquinone/menaquinone biosynthesis C-methyltransferase UbiE from Klebsiella pneumoniae subsp. pneumoniae (strain ATCC 700721 / MGH 78578).